The chain runs to 537 residues: Efflux pump ustT (537 aa).

Residues 1–25 (MAKEAQSLHELDNMKEKEVDQEKKA) are compositionally biased toward basic and acidic residues. Residues 1 to 50 (MAKEAQSLHELDNMKEKEVDQEKKAPTSVGDQEEHDDPKKQASHSQNVSE) form a disordered region. N-linked (GlcNAc...) asparagine glycosylation is present at Asn47. 8 helical membrane-spanning segments follow: residues 71 to 91 (PLAMAVIMVAISMGMFLVSLL), 104 to 124 (WVYMSLVFIFVIGSAVGAGAM), 137 to 157 (GIGLGGVLSGSTILIAENAPL), 162 to 182 (MFLGILMATMSISAIVGPLIG), 193 to 213 (WCFILNIPIGGAIIAVLFFFV), 236 to 256 (LGSALLLPAVVCLILALQWAG), 266 to 286 (IILLFVFGGLLSIGFVVSQML), and 304 to 324 (FGSFLFSAMTGGAMLVVTYWI). N-linked (GlcNAc...) asparagine glycosylation occurs at Asn333. Transmembrane regions (helical) follow at residues 339 to 359 (AGIRTIALVLSQAVGAIMGGG), 363 to 383 (LIGYPPPIMMISATFIAVGAG), 397 to 417 (WIGYQILMGLGLGFGTQQASL), and 430 to 450 (TAISLIFFGMQLGGSIFVCIG). Asn501 carries N-linked (GlcNAc...) asparagine glycosylation. Residues 507–527 (TFYVALAAGITSMLSAFLVQW) traverse the membrane as a helical segment.

The protein belongs to the major facilitator superfamily. TCR/Tet family.

It is found in the cell membrane. Efflux pump; part of the gene cluster that mediates the biosynthesis of ustilaginoidins, dimeric gamma-naphthopyrones isolated from different fungal species. In Ustilaginoidea virens (Rice false smut fungus), this protein is Efflux pump ustT.